The sequence spans 316 residues: MFKFDRKQEVYEVGGVKFGGQPGEYPTVLVSTMFYARHKIVTDEDKGIFDRAAAETLWNTQVSLSDATGNPYVNQIVGETPESIRKYIDWFIEIDDKTPFLIDSSAGEVRAAAAQYCTEIGVANRAIHNSINASIEQSEIDILTESDVEAAIVLAFNATDPTVKGKLDILEVGGSGQTKGMLQVAEECGIKIPLIDVAAMPLGAGSGATIRSIPTIKGKLGLPVGGGYHNMASAWDWLRKFKKTQPDPKAIYMPADIGTNLVAQIAGSDFLLYGPIENVEKVFPAVAMVDIMLGETAKELGVEIADSENHPVTRLT.

The protein belongs to the MtrH family. In terms of assembly, the complex is composed of 8 subunits; MtrA, MtrB, MtrC, MtrD, MtrE, MtrF, MtrG and MtrH.

It catalyses the reaction 5-methyl-5,6,7,8-tetrahydromethanopterin + coenzyme M + 2 Na(+)(in) = 5,6,7,8-tetrahydromethanopterin + methyl-coenzyme M + 2 Na(+)(out). It participates in one-carbon metabolism; methanogenesis from CO(2); methyl-coenzyme M from 5,10-methylene-5,6,7,8-tetrahydromethanopterin: step 2/2. Its function is as follows. Part of a complex that catalyzes the formation of methyl-coenzyme M and tetrahydromethanopterin from coenzyme M and methyl-tetrahydromethanopterin. This is an energy-conserving, sodium-ion translocating step. MtrH catalyzes the transfer of the methyl group from methyl-tetrahydromethanopterin to the corrinoid prosthetic group of MtrA. The chain is Tetrahydromethanopterin S-methyltransferase subunit H from Methanosarcina acetivorans (strain ATCC 35395 / DSM 2834 / JCM 12185 / C2A).